A 284-amino-acid chain; its full sequence is D-tagatose-1,6-bisphosphate aldolase subunit GatY (284 aa).

D82 (proton donor) is an active-site residue. Residues H83 and H180 each coordinate Zn(2+). G181 contributes to the dihydroxyacetone phosphate binding site. H208 contacts Zn(2+). Residues 209–211 (GAS) and 230–233 (NVAT) contribute to the dihydroxyacetone phosphate site.

Belongs to the class II fructose-bisphosphate aldolase family. TagBP aldolase GatY subfamily. Forms a complex with GatZ. Zn(2+) serves as cofactor.

The enzyme catalyses D-tagatofuranose 1,6-bisphosphate = D-glyceraldehyde 3-phosphate + dihydroxyacetone phosphate. It functions in the pathway carbohydrate metabolism; D-tagatose 6-phosphate degradation; D-glyceraldehyde 3-phosphate and glycerone phosphate from D-tagatose 6-phosphate: step 2/2. Functionally, catalytic subunit of the tagatose-1,6-bisphosphate aldolase GatYZ, which catalyzes the reversible aldol condensation of dihydroxyacetone phosphate (DHAP or glycerone-phosphate) with glyceraldehyde 3-phosphate (G3P) to produce tagatose 1,6-bisphosphate (TBP). Requires GatZ subunit for full activity and stability. Is involved in the catabolism of galactitol. The protein is D-tagatose-1,6-bisphosphate aldolase subunit GatY of Escherichia coli (strain K12 / MC4100 / BW2952).